Consider the following 201-residue polypeptide: Ependymin-related protein 2 (201 aa).

The signal sequence occupies residues 1-21 (MILQVVLLLACLSGAIVSTGA). Residues asparagine 38 and asparagine 137 are each glycosylated (N-linked (GlcNAc...) asparagine). The short motif at 199 to 201 (CRA) is the Microbody targeting signal element.

It belongs to the ependymin family. As to expression, component of the acid-soluble and acid-insoluble organic matrix of calcified shell layers (at protein level).

It localises to the secreted. The chain is Ependymin-related protein 2 from Haliotis asinina (Donkey's ear abalone).